A 249-amino-acid polypeptide reads, in one-letter code: Probable transcriptional regulatory protein ERGA_CDS_03720 (249 aa).

The segment at 1–21 (MAGHSQFANIKHRKGAQDAKR) is disordered.

The protein belongs to the TACO1 family.

It localises to the cytoplasm. In Ehrlichia ruminantium (strain Gardel), this protein is Probable transcriptional regulatory protein ERGA_CDS_03720.